Reading from the N-terminus, the 274-residue chain is Urease accessory protein UreD 2 (274 aa).

Belongs to the UreD family. UreD, UreF and UreG form a complex that acts as a GTP-hydrolysis-dependent molecular chaperone, activating the urease apoprotein by helping to assemble the nickel containing metallocenter of UreC. The UreE protein probably delivers the nickel.

Its subcellular location is the cytoplasm. In terms of biological role, required for maturation of urease via the functional incorporation of the urease nickel metallocenter. This chain is Urease accessory protein UreD 2, found in Brucella anthropi (strain ATCC 49188 / DSM 6882 / CCUG 24695 / JCM 21032 / LMG 3331 / NBRC 15819 / NCTC 12168 / Alc 37) (Ochrobactrum anthropi).